A 452-amino-acid polypeptide reads, in one-letter code: Bifunctional protein GlmU (452 aa).

Residues 1–232 (MTSRTSLTIV…EDEVRGINTK (232 aa)) are pyrophosphorylase. UDP-N-acetyl-alpha-D-glucosamine-binding positions include 11–14 (LAAG), Lys-25, Gln-78, and 83–84 (GT). Asp-108 provides a ligand contact to Mg(2+). UDP-N-acetyl-alpha-D-glucosamine contacts are provided by Gly-144, Glu-158, Asn-173, and Asn-230. Asn-230 serves as a coordination point for Mg(2+). The tract at residues 233 to 253 (AQLAEAEAVMQARLRQAALDA) is linker. The segment at 254–452 (GVTMIAPETV…KTRGKTRPAK (199 aa)) is N-acetyltransferase. UDP-N-acetyl-alpha-D-glucosamine is bound by residues Arg-319 and Lys-337. The active-site Proton acceptor is His-349. 2 residues coordinate UDP-N-acetyl-alpha-D-glucosamine: Tyr-352 and Asn-363. Acetyl-CoA is bound by residues Ala-366, 372–373 (NY), Ser-391, Ser-409, and Arg-426.

This sequence in the N-terminal section; belongs to the N-acetylglucosamine-1-phosphate uridyltransferase family. It in the C-terminal section; belongs to the transferase hexapeptide repeat family. As to quaternary structure, homotrimer. It depends on Mg(2+) as a cofactor.

It is found in the cytoplasm. It catalyses the reaction alpha-D-glucosamine 1-phosphate + acetyl-CoA = N-acetyl-alpha-D-glucosamine 1-phosphate + CoA + H(+). The enzyme catalyses N-acetyl-alpha-D-glucosamine 1-phosphate + UTP + H(+) = UDP-N-acetyl-alpha-D-glucosamine + diphosphate. Its pathway is nucleotide-sugar biosynthesis; UDP-N-acetyl-alpha-D-glucosamine biosynthesis; N-acetyl-alpha-D-glucosamine 1-phosphate from alpha-D-glucosamine 6-phosphate (route II): step 2/2. It participates in nucleotide-sugar biosynthesis; UDP-N-acetyl-alpha-D-glucosamine biosynthesis; UDP-N-acetyl-alpha-D-glucosamine from N-acetyl-alpha-D-glucosamine 1-phosphate: step 1/1. It functions in the pathway bacterial outer membrane biogenesis; LPS lipid A biosynthesis. Catalyzes the last two sequential reactions in the de novo biosynthetic pathway for UDP-N-acetylglucosamine (UDP-GlcNAc). The C-terminal domain catalyzes the transfer of acetyl group from acetyl coenzyme A to glucosamine-1-phosphate (GlcN-1-P) to produce N-acetylglucosamine-1-phosphate (GlcNAc-1-P), which is converted into UDP-GlcNAc by the transfer of uridine 5-monophosphate (from uridine 5-triphosphate), a reaction catalyzed by the N-terminal domain. The sequence is that of Bifunctional protein GlmU from Rhodopseudomonas palustris (strain BisA53).